Here is a 103-residue protein sequence, read N- to C-terminus: Large ribosomal subunit protein bL21 (103 aa).

Belongs to the bacterial ribosomal protein bL21 family. Part of the 50S ribosomal subunit. Contacts protein L20.

Functionally, this protein binds to 23S rRNA in the presence of protein L20. The polypeptide is Large ribosomal subunit protein bL21 (Teredinibacter turnerae (strain ATCC 39867 / T7901)).